Reading from the N-terminus, the 148-residue chain is Cystatin-D (148 aa).

Positions 1 to 33 (MASLLSPSMPVLAAVALTLTLAVIPEASTNAEA) are cleaved as a signal peptide. The region spanning 36–148 (VVLGGVEPAD…SMTNFNCYNF (113 aa)) is the Cystatin kininogen-type domain. Intrachain disulfides connect Cys101–Cys111 and Cys125–Cys145.

This sequence belongs to the cystatin family. In cartilage, expressed mainly in mature chondrocytes including prehypertrophic and hypertrophic cells (at protein level). Expressed exclusively in cartilage.

It is found in the cytoplasm. The protein resides in the cytosol. Functionally, may play a role in the last steps of the chondrocyte differentiation pathway as an inducer of maturation. Induces chondrocyte calcification during endochondral ossification by playing a role in the transcriptional inhibition of ENPP1, a generator of pyrophosphate which inhibits calcification. Possibly impairs the binding of a transcription factor to the ENPP1 promoter. Unlike other cystatins, does not have thiol protease inhibitor activity. This is Cystatin-D from Mus musculus (Mouse).